We begin with the raw amino-acid sequence, 78 residues long: uncharacterized protein (78 aa).

Residues 56 to 66 show a composition bias toward basic and acidic residues; sequence ERANAGKRVSE. Residues 56-78 are disordered; sequence ERANAGKRVSEEEQINGKRKRKD.

This is an uncharacterized protein from Saccharomyces cerevisiae (strain ATCC 204508 / S288c) (Baker's yeast).